The following is a 521-amino-acid chain: 2-isopropylmalate synthase (521 aa).

Positions Val-12 to Thr-274 constitute a Pyruvate carboxyltransferase domain. 4 residues coordinate Mn(2+): Asp-21, His-209, His-211, and Asn-245. The interval Lys-398–Ser-521 is regulatory domain.

This sequence belongs to the alpha-IPM synthase/homocitrate synthase family. LeuA type 1 subfamily. In terms of assembly, homodimer. Requires Mn(2+) as cofactor.

It localises to the cytoplasm. It catalyses the reaction 3-methyl-2-oxobutanoate + acetyl-CoA + H2O = (2S)-2-isopropylmalate + CoA + H(+). The protein operates within amino-acid biosynthesis; L-leucine biosynthesis; L-leucine from 3-methyl-2-oxobutanoate: step 1/4. Its function is as follows. Catalyzes the condensation of the acetyl group of acetyl-CoA with 3-methyl-2-oxobutanoate (2-ketoisovalerate) to form 3-carboxy-3-hydroxy-4-methylpentanoate (2-isopropylmalate). The protein is 2-isopropylmalate synthase of Rhodopseudomonas palustris (strain BisA53).